The following is a 158-amino-acid chain: Ribosomal RNA large subunit methyltransferase H (158 aa).

Residues leucine 72, glycine 103, and 122–127 contribute to the S-adenosyl-L-methionine site; that span reads LGNLTL.

It belongs to the RNA methyltransferase RlmH family. As to quaternary structure, homodimer.

The protein resides in the cytoplasm. The catalysed reaction is pseudouridine(1915) in 23S rRNA + S-adenosyl-L-methionine = N(3)-methylpseudouridine(1915) in 23S rRNA + S-adenosyl-L-homocysteine + H(+). Specifically methylates the pseudouridine at position 1915 (m3Psi1915) in 23S rRNA. This Acidiphilium cryptum (strain JF-5) protein is Ribosomal RNA large subunit methyltransferase H.